The primary structure comprises 191 residues: Adenylate kinase (191 aa).

11 to 16 serves as a coordination point for ATP; that stretch reads GSGKGT. The interval 31-60 is NMP; it reads STGEILRREIKDKTELGKIAEEYINQGQLL. AMP contacts are provided by residues threonine 32, arginine 37, 58-60, 86-89, and glutamine 93; these read QLL and GFPR. The segment at 127–137 is LID; it reads KRGKLFSRKDD. Arginine 128 serves as a coordination point for ATP. AMP contacts are provided by arginine 134 and arginine 145. Asparagine 173 provides a ligand contact to ATP.

The protein belongs to the adenylate kinase family. Monomer.

The protein localises to the cytoplasm. It carries out the reaction AMP + ATP = 2 ADP. The protein operates within purine metabolism; AMP biosynthesis via salvage pathway; AMP from ADP: step 1/1. In terms of biological role, catalyzes the reversible transfer of the terminal phosphate group between ATP and AMP. Plays an important role in cellular energy homeostasis and in adenine nucleotide metabolism. In Azobacteroides pseudotrichonymphae genomovar. CFP2, this protein is Adenylate kinase.